Here is a 1106-residue protein sequence, read N- to C-terminus: Solute carrier family 12 member 7 (1106 aa).

At 1-143 (MVYTALTWQR…PRESKAPCMG (143 aa)) the chain is on the cytoplasmic side. The segment at 17–83 (GLVPSHLPQE…SPFIGSAAAD (67 aa)) is disordered. Phosphoserine is present on residues serine 74 and serine 86. Residues 144 to 166 (TFIGVYLPCLQNILGVILFLRLT) form a discontinuously helical membrane-spanning segment. Asparagine 155 and isoleucine 156 together coordinate K(+). Valine 159 provides a ligand contact to chloride. The Extracellular portion of the chain corresponds to 167–173 (WIVGAAG). A helical transmembrane segment spans residues 174-196 (VLESFLVVSMCCTCTMLTAVSMS). Residues 197–220 (AIATNGVVPAGGSYYMISRSLGPE) are Cytoplasmic-facing. A helical transmembrane segment spans residues 221 to 249 (FGGAVGLCFYLGTTFAGAMYILGTIEIFL). Residues 250-273 (TYISPGAAVFQAETPEGEAAALLH) are Extracellular-facing. The next 2 helical transmembrane spans lie at 274-295 (NMRV…VGVK) and 296-324 (YVNK…KTAF). Residues 325–443 (DPPDIPVCLL…PYVLSDITTY (119 aa)) lie on the Extracellular side of the membrane. N-linked (GlcNAc...) asparagine glycosylation is found at asparagine 336, asparagine 355, and asparagine 384. Residues 444 to 464 (FTVLVGIYFPSVTGIMAGSNR) form a helical membrane-spanning segment. Residues proline 453 and threonine 456 each contribute to the K(+) site. Chloride is bound at residue proline 453. Chloride contacts are provided by glycine 457 and isoleucine 458. Topologically, residues 465 to 474 (SGDLKDAQKS) are cytoplasmic. The chain crosses the membrane as a helical span at residues 475–497 (IPTGTILAIVTTSFIYLSCIVLF). Residues 498-528 (GACIEGVVLRDKFGEALQGNLVIGMLAWPSP) are Extracellular-facing. A helical transmembrane segment spans residues 529-555 (WVIVIGSFFSTCGAGLQSLTGAPRLLQ). The Cytoplasmic segment spans residues 556-578 (AIARDGIVPFLQVFGHGKANGEP). 2 helical membrane-spanning segments follow: residues 579 to 597 (TWAL…LIAS) and 598 to 622 (LDSV…ACAV). Residue tyrosine 613 participates in chloride binding. The Cytoplasmic portion of the chain corresponds to 623-636 (QTLLRTPNWRPRFK). 2 helical membrane passes run 637 to 659 (YYHW…ICSW) and 660 to 675 (YYAL…IYKY). Over 676–1106 (IEYRGAEKEW…GGREVITIYS (431 aa)) the chain is Cytoplasmic. The segment at 688–704 (GIRGLSLNAARYALLRV) is scissor helix. The interval 980 to 999 (RNTASHTAASRAQAPPTPDK) is disordered. Residues threonine 996 and threonine 1003 each carry the phosphothreonine modification.

The protein belongs to the SLC12A transporter family. K/Cl co-transporter subfamily. Homodimer; adopts a domain-swap conformation at the scissor helices connecting the transmembrane domain and C-terminal domain. Heterodimer with K-Cl cotransporter SLC12A5. Widely expressed. Higher levels in heart, kidney and lung (at protein level).

It localises to the cell membrane. It carries out the reaction K(+)(in) + chloride(in) = K(+)(out) + chloride(out). Its activity is regulated as follows. Activated by N-ethylmaleimide (NEM). Inhibited by furosemide, DIDS and bumetanide. The inhibition is much stronger in the presence of 50 mM K(+) in the uptake medium. Inhibited by DIOA. Inhibited by WNK3. Its function is as follows. Mediates electroneutral potassium-chloride cotransport when activated by cell swelling. May mediate K(+) uptake into Deiters' cells in the cochlea and contribute to K(+) recycling in the inner ear. Important for the survival of cochlear outer and inner hair cells and the maintenance of the organ of Corti. May be required for basolateral Cl(-) extrusion in the kidney and contribute to renal acidification. The protein is Solute carrier family 12 member 7 of Oryctolagus cuniculus (Rabbit).